The following is an 84-amino-acid chain: Small ribosomal subunit protein uS17 (84 aa).

It belongs to the universal ribosomal protein uS17 family. Part of the 30S ribosomal subunit.

One of the primary rRNA binding proteins, it binds specifically to the 5'-end of 16S ribosomal RNA. The chain is Small ribosomal subunit protein uS17 from Clostridium novyi (strain NT).